The chain runs to 445 residues: Enolase (445 aa).

2 residues coordinate substrate: H165 and E174. E217 acts as the Proton donor in catalysis. Mg(2+) is bound by residues D252, E303, and D330. Substrate-binding residues include E303 and D330. Catalysis depends on K355, which acts as the Proton acceptor. Substrate is bound by residues 382-385 (SHRS) and K406.

The protein belongs to the enolase family. In terms of assembly, homodimer. The cofactor is Mg(2+).

The protein localises to the cytoplasm. The enzyme catalyses (2R)-2-phosphoglycerate = phosphoenolpyruvate + H2O. The protein operates within carbohydrate degradation; glycolysis; pyruvate from D-glyceraldehyde 3-phosphate: step 4/5. This is Enolase (ENO) from Eimeria tenella (Coccidian parasite).